The chain runs to 141 residues: MRHGKAGRKLNRTASHRKAMFANMAASLIEHEQIVTTLPKAKEIRPIVEKLVTLGKRGDLHARRQAVSQIRDVAVVAKLFDAIASRYATRNGGYLRIMKAGFRQGDNAPLAVIEFVDRDADAKGSKDRARVAAEAEAAEAA.

The protein belongs to the bacterial ribosomal protein bL17 family. In terms of assembly, part of the 50S ribosomal subunit. Contacts protein L32.

The chain is Large ribosomal subunit protein bL17 from Sinorhizobium medicae (strain WSM419) (Ensifer medicae).